We begin with the raw amino-acid sequence, 388 residues long: MKIHEYQGKEILRKFGVAVPRGKPAFSVDEAVKVAEELGGPVWVVKAQIHAGGRGKGGGVKVAKSLDQVREYANQILGMQLKTHQTGPEGQKVNRLLIEEGADIKKELYVGIVIDRVSQKVVVMASSEGGMDIEEVAEKTPEAIHKVAVEPSTGLQDAEADDLAKKIGVPDASIPQAREILKGLYKSFWETDASLAEINPLVLTGDGKVIALDAKFNFDSNALFRHPEIVAYRDLDEEDPAEIEASKFDLAYISLDGNIGCLVNGAGLAMATMDTIKLFGGEPANFLDVGGGATTEKVTEAFKLMLKNPGLKAILVNIFGGIMRCDVIAEGVIAGSKAVNLNVPLVVRMKGTNEDLGKKMLAESGLPIISADSMEEAAQKVVAAAAGK.

The region spanning 9–244 (KEILRKFGVA…LDEEDPAEIE (236 aa)) is the ATP-grasp domain. ATP-binding positions include Lys46, 53 to 55 (GRG), Glu99, Ala102, and Glu107. 2 residues coordinate Mg(2+): Asn199 and Asp213. Residues Asn264 and 321-323 (GIM) each bind substrate.

It belongs to the succinate/malate CoA ligase beta subunit family. In terms of assembly, heterotetramer of two alpha and two beta subunits. The cofactor is Mg(2+).

The catalysed reaction is succinate + ATP + CoA = succinyl-CoA + ADP + phosphate. It catalyses the reaction GTP + succinate + CoA = succinyl-CoA + GDP + phosphate. It functions in the pathway carbohydrate metabolism; tricarboxylic acid cycle; succinate from succinyl-CoA (ligase route): step 1/1. In terms of biological role, succinyl-CoA synthetase functions in the citric acid cycle (TCA), coupling the hydrolysis of succinyl-CoA to the synthesis of either ATP or GTP and thus represents the only step of substrate-level phosphorylation in the TCA. The beta subunit provides nucleotide specificity of the enzyme and binds the substrate succinate, while the binding sites for coenzyme A and phosphate are found in the alpha subunit. The polypeptide is Succinate--CoA ligase [ADP-forming] subunit beta (Burkholderia thailandensis (strain ATCC 700388 / DSM 13276 / CCUG 48851 / CIP 106301 / E264)).